The chain runs to 355 residues: S-adenosylmethionine:tRNA ribosyltransferase-isomerase (355 aa).

Belongs to the QueA family. Monomer.

It is found in the cytoplasm. It carries out the reaction 7-aminomethyl-7-carbaguanosine(34) in tRNA + S-adenosyl-L-methionine = epoxyqueuosine(34) in tRNA + adenine + L-methionine + 2 H(+). It functions in the pathway tRNA modification; tRNA-queuosine biosynthesis. Its function is as follows. Transfers and isomerizes the ribose moiety from AdoMet to the 7-aminomethyl group of 7-deazaguanine (preQ1-tRNA) to give epoxyqueuosine (oQ-tRNA). This Burkholderia orbicola (strain MC0-3) protein is S-adenosylmethionine:tRNA ribosyltransferase-isomerase.